The chain runs to 230 residues: Ribonuclease 3 (230 aa).

Positions 1–134 (MKQLEELLST…FLGALLLDKG (134 aa)) constitute an RNase III domain. Residue Glu-47 participates in Mg(2+) binding. Asp-51 is a catalytic residue. Residues Asp-120 and Glu-123 each coordinate Mg(2+). Residue Glu-123 is part of the active site. Positions 160 to 229 (DYKTCLQEFL…AKNALAQLSE (70 aa)) constitute a DRBM domain.

Belongs to the ribonuclease III family. Homodimer. It depends on Mg(2+) as a cofactor.

It is found in the cytoplasm. It carries out the reaction Endonucleolytic cleavage to 5'-phosphomonoester.. In terms of biological role, digests double-stranded RNA. Involved in the processing of primary rRNA transcript to yield the immediate precursors to the large and small rRNAs (23S and 16S). Processes some mRNAs, and tRNAs when they are encoded in the rRNA operon. Processes pre-crRNA and tracrRNA of type II CRISPR loci if present in the organism. The sequence is that of Ribonuclease 3 from Streptococcus pyogenes serotype M28 (strain MGAS6180).